A 207-amino-acid polypeptide reads, in one-letter code: Ribosome maturation factor RimP (207 aa).

This sequence belongs to the RimP family.

Its subcellular location is the cytoplasm. In terms of biological role, required for maturation of 30S ribosomal subunits. The sequence is that of Ribosome maturation factor RimP from Parvibaculum lavamentivorans (strain DS-1 / DSM 13023 / NCIMB 13966).